A 538-amino-acid chain; its full sequence is Putative cysteine ligase BshC (538 aa).

This sequence belongs to the BshC family.

In terms of biological role, involved in bacillithiol (BSH) biosynthesis. May catalyze the last step of the pathway, the addition of cysteine to glucosamine malate (GlcN-Mal) to generate BSH. In Halalkalibacterium halodurans (strain ATCC BAA-125 / DSM 18197 / FERM 7344 / JCM 9153 / C-125) (Bacillus halodurans), this protein is Putative cysteine ligase BshC.